The following is a 491-amino-acid chain: Cobyric acid synthase (491 aa).

A GATase cobBQ-type domain is found at 250 to 439 (EVTIAVIRLP…LHGIFDNGAW (190 aa)). C331 (nucleophile) is an active-site residue. H431 is an active-site residue.

This sequence belongs to the CobB/CobQ family. CobQ subfamily.

The protein operates within cofactor biosynthesis; adenosylcobalamin biosynthesis. Catalyzes amidations at positions B, D, E, and G on adenosylcobyrinic A,C-diamide. NH(2) groups are provided by glutamine, and one molecule of ATP is hydrogenolyzed for each amidation. The sequence is that of Cobyric acid synthase from Synechococcus sp. (strain ATCC 27144 / PCC 6301 / SAUG 1402/1) (Anacystis nidulans).